Reading from the N-terminus, the 330-residue chain is D-lactate dehydrogenase (330 aa).

NAD(+) is bound by residues 155–156 (RI), D175, 206–207 (MP), N212, 233–235 (MAR), and D259. R235 is an active-site residue. E264 is a catalytic residue. The Proton donor role is filled by H296.

This sequence belongs to the D-isomer specific 2-hydroxyacid dehydrogenase family.

It catalyses the reaction (R)-lactate + NAD(+) = pyruvate + NADH + H(+). The chain is D-lactate dehydrogenase (ldhD) from Streptococcus agalactiae serotype V (strain ATCC BAA-611 / 2603 V/R).